We begin with the raw amino-acid sequence, 2313 residues long: MEESGPPSNPSPVASRGRGRGRPPKVALSALGNTPPHINPSLKHADAEASPTAPEDQDSGQSECRRSSRKKIIKFDVRDLLNKNRKAHKIQIEARIDSNPSTGHSQSGTTAASTSMSTATASAASASSAATVSRLFSMFEMSHQSLPPPPPPPTALEIFAKPRPTQSLIVAQVTSEPSAVGGAHPVQTMAGLPPVTPRKRGRPRKSQLADAAIIPTVIVPSCSDSDTNSTSTTTSNMSSDSGELPGFPIQKPKSKLRVSLKRLKLGGRLESSDSGNSPSSSSPEVEPPALQDENAMDERPKQEQNLSRMVDAEENSDSDSQIIFIEIETESPKGEEEQEEGRPVEVEPQDLIDIDMELAKQEPTPDPEEDLDEIMVEVLSGPPSLWSADDEAEEEEDATVQRATPPGKEPAADSCSSAPRRSRRSAPLSGSSRQGKTLEETFAEIAAESSKQILEAEESQDQEEQHILIDLIEDTLKSDNIAASLNKDIFEPKVETKATCGEVVPRPEMVTEDVYITEGIAATLEKSAVVTKPTTEMIAETKLSDEVVIEPPLKDESDPKQTEVELPESKPAVNIPKSERILSAEVETTSSPLVPPECCTLESVSGPVLLETSLSTEEKSNENVETTPLKTEAAKEDSPPAAPEEEASNSSEEPNFLLEDYESNQEQVAEDEMMKCNNQKGQKQTPLPEMKEPEKPVAETVSKKEKAMENPARSSPAIVDKKVRAGEMEKKVVKSTKGTVPEKKMDSKKSCAAVTPAKQKESGKSAKEAILKKETEKEKSSAKLDSSSPNTLDKKGKDTAQWSPQLQTLPKSSTKPPQESAPSVISKTTSNQPAPKEEQHAAKKGLSDNSPPSVLKAKEKAVSGFVECDAMFKAMDLANAQLRLDEKNKKKLKKVPTKVEAPPKVEPPTAVPVPGQKKSLSGKTSLRRNTVYEDSPNLERNSSPSSDSAQANTSAGKLKPSKVKKKINPRRSTICEAAKDLRSSSSSSTPTREVAASSPVSTSSDSSSKRNGSKRTTSDLDGGSKLDQRRYTICEDRQPETAIPVPLTKRRFSMHPKASANPLHDTLLQTAGKKRGRKEGKESLSRQNSLDSSSSASQGAPKKKALKSAEILSAALLETESSESTSSGSKMSRWDVQTSPELEAANPFGDIAKFIEDGVNLLKRDKVDEDQRKEGQDEVKREADPEEDEFAQRVANMETPATTPTPSPTQSNPEDSASTTTVLKELETGGGVRRSHRIKQKPQGPRASQGRGVASVALAPISMDEQLAELANIEAINEQFLRSEGLNTFQLLKENFYRCARQVSQENAEMQCDCFLTGDEEAQGHLSCGAGCINRMLMIECGPLCSNGARCTNKRFQQHQCWPCRVFRTEKKGCGITAELLIPPGEFIMEYVGEVIDSEEFERRQHLYSKDRNRHYYFMALRGEAVIDATSKGNISRYINHSCDPNAETQKWTVNGELRIGFFSVKPIQPGEEITFDYQYLRYGRDAQRCYCEAANCRGWIGGEPDSDEGEQLDEESDSDAEMDEEELEAEPEEGQPRKSAKAKAKSKLKAKLPLATGRKRKEQTKPKDREYKAGRWLKPSATGSSSSAEKPPKKPKVNKFQAMLEDPDVVEELSLLRRGGLKNQQDTLRFSRCLVRAKLLKTRLALLRVLTHGELPCRRLFLDYHGLRLLHAWISENGNDDQLREALLDTLESLPIPNRTMLSDSRVYQSVQLWSNSLEQQLAVVPQEKQAALHKRMVALLQKWQALPEIFRIPKRERIEQMKEHEREADRQQKHVHASTALEDQRERESSNDRFRQDRFRRDTTSSRIGKPIRMSGNNTICTITTQQKGSNGAPDGMTRNDNRRRSDIGPPSEQRRTLSKELRRSLFERKVALDEAERRVCTEDRLEHELRCEFFGADINTDPKQLPFYQKTDTNEWFNSDDVPVPAPPRTELLTKALLSPDIDVGQGATDVEYKLPPGVDPLPPAWNWQVTSDGDIYYYNLRERISQWEPPSPEQRLQTLLEENTTQQPLHELQIDPAVLENELIQVDTDYVGSLSAKSLAQYIEAKVRERRDLRRSKLVSIRLISPRRDEDRLYNQLESRKYKENKEKIRRRKELYRRRKIEVLPDAVDEIPVPGKALPIQPYLFSSDEEETKVAAIEQPAAEEEQDSLNMAPSTSHAAMAALGKAVAQPTGLGTVGKRKLPMPPSVTVKKHRQEQRSKKVKSSQSPLTATSAREAHEKFRFEISGHVANFLRPYRKESCTLGRITSDEDYKFLVNRLSYHITTKEMRYCEVSGNPLSCTESVKHKSYDFINQYMRQKGPVYKKPAEND.

Disordered stretches follow at residues 1 to 115, 179 to 442, 550 to 858, 883 to 1106, 1118 to 1150, and 1163 to 1251; these read MEES…ASTS, AVGG…EETF, EPPL…LKAK, RLDE…KKAL, ETESSESTSSGSKMSRWDVQTSPELEAANPFGD, and KRDK…SQGR. The segment at residues 17–29 is a DNA-binding region (a.T hook 1); it reads GRGRGRPPKVALS. Over residues 73–82 the composition is skewed to basic and acidic residues; it reads IKFDVRDLLN. Residues 101 to 115 are compositionally biased toward low complexity; it reads STGHSQSGTTAASTS. A DNA-binding region (a.T hook 2) is located at residues 197-209; it reads PRKRGRPRKSQLA. Low complexity predominate over residues 221 to 241; that stretch reads SCSDSDTNSTSTTTSNMSSDS. Residues 252 to 265 show a composition bias toward basic residues; it reads PKSKLRVSLKRLKL. Low complexity predominate over residues 266 to 288; sequence GGRLESSDSGNSPSSSSPEVEPP. Basic and acidic residues predominate over residues 330–345; it reads ESPKGEEEQEEGRPVE. Composition is skewed to acidic residues over residues 347–356, 365–375, and 388–398; these read EPQDLIDIDM, PDPEEDLDEIM, and ADDEAEEEEDA. Residue threonine 404 is modified to Phosphothreonine. Residues 412–433 show a composition bias toward low complexity; sequence ADSCSSAPRRSRRSAPLSGSSR. Residues 552–563 are compositionally biased toward basic and acidic residues; it reads PLKDESDPKQTE. Residues 659 to 671 show a composition bias toward acidic residues; the sequence is EDYESNQEQVAED. A compositionally biased stretch (polar residues) spans 676-685; that stretch reads CNNQKGQKQT. 4 stretches are compositionally biased toward basic and acidic residues: residues 689–708, 719–732, 740–749, and 758–782; these read EMKEPEKPVAETVSKKEKAM, VDKKVRAGEMEKKV, VPEKKMDSKK, and KQKESGKSAKEAILKKETEKEKSSA. 2 positions are modified to phosphoserine: serine 786 and serine 788. 3 stretches are compositionally biased toward polar residues: residues 800–833, 918–928, and 938–955; these read AQWSPQLQTLPKSSTKPPQESAPSVISKTTSNQP, KSLSGKTSLRR, and LERNSSPSSDSAQANTSA. Basic residues predominate over residues 959–969; sequence KPSKVKKKINP. Positions 997 to 1010 are enriched in low complexity; the sequence is SSPVSTSSDSSSKR. Basic and acidic residues predominate over residues 1016-1039; it reads TTSDLDGGSKLDQRRYTICEDRQP. 2 stretches are compositionally biased toward low complexity: residues 1085-1097 and 1118-1127; these read SRQNSLDSSSSAS and ETESSESTSS. A compositionally biased stretch (basic and acidic residues) spans 1163–1183; it reads KRDKVDEDQRKEGQDEVKREA. Over residues 1199 to 1213 the composition is skewed to low complexity; sequence TPATTPTPSPTQSNP. The region spanning 1307 to 1360 is the AWS domain; it reads NAEMQCDCFLTGDEEAQGHLSCGAGCINRMLMIECGPLCSNGARCTNKRFQQHQ. Residues cysteine 1312, cysteine 1314, cysteine 1328, cysteine 1332, cysteine 1341, cysteine 1345, and cysteine 1351 each coordinate Zn(2+). One can recognise an SET domain in the interval 1362–1479; it reads WPCRVFRTEK…PGEEITFDYQ (118 aa). Residues 1415–1417 and 1440–1441 each bind S-adenosyl-L-methionine; these read HYY and NH. Cysteine 1443 serves as a coordination point for Zn(2+). Residues 1486–1502 form the Post-SET domain; that stretch reads DAQRCYCEAANCRGWIG. S-adenosyl-L-methionine is bound at residue glutamine 1488. Cysteine 1490 contributes to the Zn(2+) binding site. An S-adenosyl-L-methionine-binding site is contributed by tyrosine 1491. The Zn(2+) site is built by cysteine 1492 and cysteine 1497. Disordered stretches follow at residues 1501–1598 and 1763–1860; these read IGGE…KPKV and MKEH…RRTL. A compositionally biased stretch (acidic residues) spans 1505-1534; sequence PDSDEGEQLDEESDSDAEMDEEELEAEPEE. Basic residues predominate over residues 1539 to 1551; the sequence is KSAKAKAKSKLKA. Basic and acidic residues-rich tracts occupy residues 1564-1574, 1763-1774, and 1784-1806; these read QTKPKDREYKA, MKEHEREADRQQ, and EDQRERESSNDRFRQDRFRRDTT. The span at 1817 to 1832 shows a compositional bias: polar residues; the sequence is SGNNTICTITTQQKGS. The segment covering 1840 to 1860 has biased composition (basic and acidic residues); that stretch reads TRNDNRRRSDIGPPSEQRRTL. Residues 1963-1996 enclose the WW domain; the sequence is DPLPPAWNWQVTSDGDIYYYNLRERISQWEPPSP. Serine 2130 and serine 2131 each carry phosphoserine. The disordered stretch occupies residues 2177–2218; the sequence is LGTVGKRKLPMPPSVTVKKHRQEQRSKKVKSSQSPLTATSAR. The segment covering 2193 to 2206 has biased composition (basic residues); the sequence is VKKHRQEQRSKKVK. Residues 2207–2216 are compositionally biased toward polar residues; the sequence is SSQSPLTATS.

The protein belongs to the class V-like SAM-binding methyltransferase superfamily. Histone-lysine methyltransferase family. SET2 subfamily. In terms of assembly, interacts with (phosphorylated) Polr2A.

It is found in the nucleus. Its subcellular location is the chromosome. It carries out the reaction L-lysyl(36)-[histone H3] + 3 S-adenosyl-L-methionine = N(6),N(6),N(6)-trimethyl-L-lysyl(36)-[histone H3] + 3 S-adenosyl-L-homocysteine + 3 H(+). Functionally, histone methyltransferase that specifically trimethylates 'Lys-36' of histone H3 (H3K36me3). Represents the main enzyme generating H3K36me3, a specific tag for epigenetic transcriptional activation. Involved in dosage compensation in males (X chromosome dosage compensation) by mediating formation of H3K36me3, a mark recognized by msl-3 component of the MSL complex. In addition to its role in dosage compensation in males, promotes germline stem cell differentiation in females: catalyzes formation of H3K36me3, promoting recruitment of msl-3 and subsequent recruitment of the ATAC complex, leading to transcription of genes, such as RpS19b. The sequence is that of Histone-lysine N-methyltransferase Set2 from Drosophila melanogaster (Fruit fly).